Reading from the N-terminus, the 504-residue chain is Putative pentatricopeptide repeat-containing protein At3g28640 (504 aa).

PPR repeat units follow at residues 77–107 (NSFVYDTMIRICSRSSQPHLGLRYFLLMVKE), 115–149 (SYLTFHFLIVACLKACFFSVGKQIHCWVVKNGVFL), 151–181 (DSHVQTGVLRIYVEDKLLLDARKVFDEIPQP), 182–216 (DVVKWDVLMNGYVRCGLGSEGLEVFREMLVKGLEP), 217–251 (DEFSVTTALTACAQVGALAQGKWIHEFVKKKSWIE), 253–287 (DVFVGTALVDMYAKCGCIETAVEVFKKLTRRNVFS), 288–319 (WAALIGGYAAYGYAKKAMTCLERLEREDGIKP), 320–350 (DSVVLLGVLAACAHGGFLEEGRSMLENMEAR), and 356–390 (KHEHYSCIVDLMCRAGRLDDALNLIEKMPMKPLAS). A type E motif region spans residues 391 to 470 (VWGALLNGCR…TPGWSVLEVD (80 aa)). The segment at 471–501 (GNVTKFVSGDVSHPNLLQIHTVIHLLSVDAL) is type E(+) motif.

This sequence belongs to the PPR family. PCMP-E subfamily.

The sequence is that of Putative pentatricopeptide repeat-containing protein At3g28640 (PCMP-E79) from Arabidopsis thaliana (Mouse-ear cress).